Here is a 114-residue protein sequence, read N- to C-terminus: Large ribosomal subunit protein uL22 (114 aa).

This sequence belongs to the universal ribosomal protein uL22 family. As to quaternary structure, part of the 50S ribosomal subunit.

Functionally, this protein binds specifically to 23S rRNA; its binding is stimulated by other ribosomal proteins, e.g. L4, L17, and L20. It is important during the early stages of 50S assembly. It makes multiple contacts with different domains of the 23S rRNA in the assembled 50S subunit and ribosome. In terms of biological role, the globular domain of the protein is located near the polypeptide exit tunnel on the outside of the subunit, while an extended beta-hairpin is found that lines the wall of the exit tunnel in the center of the 70S ribosome. This Bacillus licheniformis (strain ATCC 14580 / DSM 13 / JCM 2505 / CCUG 7422 / NBRC 12200 / NCIMB 9375 / NCTC 10341 / NRRL NRS-1264 / Gibson 46) protein is Large ribosomal subunit protein uL22.